The following is an 898-amino-acid chain: MQTHEIRKRFLDHFVKAGHTEVPSASVILDDPNLLFVNAGMVQFVPYFLGQRTPPWDRATSVQKCIRTPDIDEVGITTRHNTFFQMAGNFSFGDYFKKGAIELAWSLLTNPVSEGGYGFDPERLWATVYLDDDEAIELWQEVAGLPAERIQRRGMADNYWSMGIPGPCGPCSEIYYDRGPDYGIDGGPEANEDRYIEIWNLVFMQNERGEGTSKDDFEILGPLPRKNIDTGMGVERIACLLQGVDNVYETDLVRPVIDLVAGIAPRGYGQGNHTDDVRYRIIGDHSRTAAIIIGDGVTPGNEGRGYVLRRLLRRIIRAAKLLGVEQPIMGELMATVRDEMGPSYPELVTDFERINRIAIAEETAFNRTLTAGSRLFEDAAETTRKAGSTVLSGDDAFTLHDTFGFPIDLTLEMAAEAGLSVDEEGFRGLMAEQRRRAKADAAARKQAHTDLSAYRELVDAGPTEFTGFDELTTEARILGIFVDGRRVPVVSHVQGGDAPGRVELILNRSPFYAESGGQIADEGTVTGTGASQTAKAAVTDVQKIAKTLWAHRITVESGEFVEGDTIVAAVDPRWRHGATQGHSGTHMVHAALRQVLGPNAVQAGSLNRPGYLRFDFNWQGALSDDQRSQIEEVTNEAVEADYEVHNFTTELEKAKSMGAMALFGENYPDEVRVVEIGGPFSIELCGGTHVRSSAQIGPVTILGESSVGSGVRRVEAYVGLDSFRHLAKERALMAGLASSLKVPSDEVPARVENLVERLRAAEKELDRLRLVNARAAAANAAAGAEQIGGIRLVAQRMAGGISAGDLRSLVGDIRGKLGSDPAVVALISEADDDTVPFVVAVNQAAQDRGLRANDLVKVLGAAVNGRGGGKADLAQGSGKGAAGIDAALAAIRAEMGRS.

The Zn(2+) site is built by His-582, His-586, Cys-685, and His-689.

Belongs to the class-II aminoacyl-tRNA synthetase family. Requires Zn(2+) as cofactor.

Its subcellular location is the cytoplasm. The enzyme catalyses tRNA(Ala) + L-alanine + ATP = L-alanyl-tRNA(Ala) + AMP + diphosphate. Functionally, catalyzes the attachment of alanine to tRNA(Ala) in a two-step reaction: alanine is first activated by ATP to form Ala-AMP and then transferred to the acceptor end of tRNA(Ala). Also edits incorrectly charged Ser-tRNA(Ala) and Gly-tRNA(Ala) via its editing domain. This chain is Alanine--tRNA ligase, found in Mycolicibacterium gilvum (strain PYR-GCK) (Mycobacterium gilvum (strain PYR-GCK)).